Consider the following 434-residue polypeptide: Methylenetetrahydrofolate--tRNA-(uracil-5-)-methyltransferase TrmFO (434 aa).

FAD is bound at residue 9-14 (GAGLAG).

Belongs to the MnmG family. TrmFO subfamily. FAD is required as a cofactor.

The protein localises to the cytoplasm. The catalysed reaction is uridine(54) in tRNA + (6R)-5,10-methylene-5,6,7,8-tetrahydrofolate + NADH + H(+) = 5-methyluridine(54) in tRNA + (6S)-5,6,7,8-tetrahydrofolate + NAD(+). It catalyses the reaction uridine(54) in tRNA + (6R)-5,10-methylene-5,6,7,8-tetrahydrofolate + NADPH + H(+) = 5-methyluridine(54) in tRNA + (6S)-5,6,7,8-tetrahydrofolate + NADP(+). Its function is as follows. Catalyzes the folate-dependent formation of 5-methyl-uridine at position 54 (M-5-U54) in all tRNAs. The sequence is that of Methylenetetrahydrofolate--tRNA-(uracil-5-)-methyltransferase TrmFO from Listeria monocytogenes serovar 1/2a (strain ATCC BAA-679 / EGD-e).